A 416-amino-acid chain; its full sequence is S-adenosylmethionine synthase (416 aa).

Position 14 (histidine 14) interacts with ATP. Mg(2+) is bound at residue aspartate 16. Glutamate 42 serves as a coordination point for K(+). Residues glutamate 55 and glutamine 98 each coordinate L-methionine. Residues 98 to 108 are flexible loop; it reads QSPDIARGVDT. Residues 173-175, 249-250, aspartate 258, 264-265, alanine 281, and lysine 285 contribute to the ATP site; these read DGK, KF, and RK. An L-methionine-binding site is contributed by aspartate 258. Lysine 289 serves as a coordination point for L-methionine.

Belongs to the AdoMet synthase family. In terms of assembly, homotetramer; dimer of dimers. Requires Mg(2+) as cofactor. K(+) serves as cofactor.

It is found in the cytoplasm. It catalyses the reaction L-methionine + ATP + H2O = S-adenosyl-L-methionine + phosphate + diphosphate. It functions in the pathway amino-acid biosynthesis; S-adenosyl-L-methionine biosynthesis; S-adenosyl-L-methionine from L-methionine: step 1/1. Catalyzes the formation of S-adenosylmethionine (AdoMet) from methionine and ATP. The overall synthetic reaction is composed of two sequential steps, AdoMet formation and the subsequent tripolyphosphate hydrolysis which occurs prior to release of AdoMet from the enzyme. This Thermosynechococcus vestitus (strain NIES-2133 / IAM M-273 / BP-1) protein is S-adenosylmethionine synthase.